Here is a 412-residue protein sequence, read N- to C-terminus: Branched-chain alpha-ketoacid dehydrogenase kinase (412 aa).

A mitochondrion-targeting transit peptide spans 1–30 (MILTSVLGSGPRSWSSLWPLLGSSLSLRAR). Serine 31 is modified (phosphoserine). Serine 52 is modified (phosphoserine; by autocatalysis). The region spanning 159–404 (LDDHKDVVTL…DVYLRLRHID (246 aa)) is the Histidine kinase domain. Lysine 192 and lysine 233 each carry N6-acetyllysine. The ATP site is built by asparagine 279 and aspartate 315. Asparagine 279 is a binding site for Mg(2+). Residues valine 328, aspartate 330, and phenylalanine 333 each coordinate K(+). ATP-binding residues include threonine 334 and threonine 335. Phosphoserine occurs at positions 356 and 360. Residues histidine 364, glycine 367, and leucine 370 each contribute to the ATP site. Glycine 367 contributes to the K(+) binding site.

This sequence belongs to the PDK/BCKDK protein kinase family. As to quaternary structure, homodimer. Homotetramer. Dimerizes through interaction of two opposing nucleotide-binding domains. Interacts with E2 component of the branched-chain alpha-ketoacid dehydrogenase (BCKDH) complex. Competes with BCKDK for binding to the E2 component; this interaction is modulated by branched-chain alpha-keto acids. At steady state, BCKDH holoenzyme contains BCKDK and BCKDHA is phosphorylated. In response to high levels of branched-chain alpha-keto acids, the inhibitory BCKDK is replaced by activating PPM1K leading to BCKDHA dephosphorylation and BCAA degradation. In terms of processing, autophosphorylated. In terms of tissue distribution, ubiquitous.

The protein resides in the mitochondrion matrix. It localises to the mitochondrion. The enzyme catalyses L-seryl-[3-methyl-2-oxobutanoate dehydrogenase] + ATP = O-phospho-L-seryl-[3-methyl-2-oxobutanoate dehydrogenase] + ADP + H(+). It catalyses the reaction L-seryl-[protein] + ATP = O-phospho-L-seryl-[protein] + ADP + H(+). In terms of biological role, serine/threonine-protein kinase component of macronutrients metabolism. Forms a functional kinase and phosphatase pair with PPM1K, serving as a metabolic regulatory node that coordinates branched-chain amino acids (BCAAs) with glucose and lipid metabolism via two distinct phosphoprotein targets: mitochondrial BCKDHA subunit of the branched-chain alpha-ketoacid dehydrogenase (BCKDH) complex and cytosolic ACLY, a lipogenic enzyme of Krebs cycle. Phosphorylates and inactivates mitochondrial BCKDH complex a multisubunit complex consisting of three multimeric components each involved in different steps of BCAA catabolism: E1 composed of BCKDHA and BCKDHB, E2 core composed of DBT monomers, and E3 composed of DLD monomers. Associates with the E2 component of BCKDH complex and phosphorylates BCKDHA on Ser-334, leading to conformational changes that interrupt substrate channeling between E1 and E2 and inactivates the BCKDH complex. Phosphorylates ACLY on Ser-455 in response to changes in cellular carbohydrate abundance such as occurs during fasting to feeding metabolic transition. Refeeding stimulates MLXIPL/ChREBP transcription factor, leading to increased BCKDK to PPM1K expression ratio, phosphorylation and activation of ACLY that ultimately results in the generation of malonyl-CoA and oxaloacetate immediate substrates of de novo lipogenesis and glucogenesis, respectively. Recognizes phosphosites having SxxE/D canonical motif. The polypeptide is Branched-chain alpha-ketoacid dehydrogenase kinase (Bckdk) (Mus musculus (Mouse)).